Consider the following 195-residue polypeptide: dITP/XTP pyrophosphatase (195 aa).

8–13 (SGNAGK) is a binding site for substrate. Mg(2+)-binding residues include E38 and D67. The active-site Proton acceptor is the D67. Residues S68, 146-149 (FGYD), K169, and 174-175 (HR) each bind substrate.

Belongs to the HAM1 NTPase family. As to quaternary structure, homodimer. Mg(2+) serves as cofactor.

The enzyme catalyses XTP + H2O = XMP + diphosphate + H(+). It catalyses the reaction dITP + H2O = dIMP + diphosphate + H(+). It carries out the reaction ITP + H2O = IMP + diphosphate + H(+). Pyrophosphatase that catalyzes the hydrolysis of nucleoside triphosphates to their monophosphate derivatives, with a high preference for the non-canonical purine nucleotides XTP (xanthosine triphosphate), dITP (deoxyinosine triphosphate) and ITP. Seems to function as a house-cleaning enzyme that removes non-canonical purine nucleotides from the nucleotide pool, thus preventing their incorporation into DNA/RNA and avoiding chromosomal lesions. This is dITP/XTP pyrophosphatase from Parasynechococcus marenigrum (strain WH8102).